Consider the following 154-residue polypeptide: Phosphopantetheine adenylyltransferase (154 aa).

Position 10 (Thr10) interacts with substrate. Residues Thr10–Phe11 and His18 contribute to the ATP site. Substrate contacts are provided by Lys42, Leu74, and Arg88. ATP contacts are provided by residues Gly89 to Arg91, Glu99, and Asn124 to Ser130.

Belongs to the bacterial CoaD family. As to quaternary structure, homohexamer. The cofactor is Mg(2+).

The protein resides in the cytoplasm. The enzyme catalyses (R)-4'-phosphopantetheine + ATP + H(+) = 3'-dephospho-CoA + diphosphate. Its pathway is cofactor biosynthesis; coenzyme A biosynthesis; CoA from (R)-pantothenate: step 4/5. Its function is as follows. Reversibly transfers an adenylyl group from ATP to 4'-phosphopantetheine, yielding dephospho-CoA (dPCoA) and pyrophosphate. The sequence is that of Phosphopantetheine adenylyltransferase from Nautilia profundicola (strain ATCC BAA-1463 / DSM 18972 / AmH).